Reading from the N-terminus, the 286-residue chain is Probable biotin transporter (286 aa).

EamA domains follow at residues 3-128 and 139-277; these read YLLF…AIIR and GFLL…LWVN. A run of 10 helical transmembrane segments spans residues 4 to 24, 26 to 46, 56 to 76, 81 to 101, 109 to 129, 136 to 156, 174 to 194, 203 to 223, 234 to 254, and 258 to 280; these read LLFV…YLAG, VDSY…FLPL, FVGG…VCLY, VLTV…VALF, FNFW…IIRY, FLQG…GQVL, FGYF…LFGD, LQWG…QFWW, TLAV…LLIW, and ADLP…NRLG.

Belongs to the drug/metabolite transporter (DMT) superfamily. 10 TMS drug/metabolite exporter (DME) (TC 2.A.7.3) family.

Its subcellular location is the cell inner membrane. The enzyme catalyses biotin(in) = biotin(out). Functionally, uptake of biotin. This is Probable biotin transporter from Pseudomonas aeruginosa (strain ATCC 15692 / DSM 22644 / CIP 104116 / JCM 14847 / LMG 12228 / 1C / PRS 101 / PAO1).